The sequence spans 227 residues: 2-phospho-L-lactate guanylyltransferase (227 aa).

The protein belongs to the CofC family. Homodimer.

The enzyme catalyses (2S)-2-phospholactate + GTP + H(+) = (2S)-lactyl-2-diphospho-5'-guanosine + diphosphate. Its pathway is cofactor biosynthesis; coenzyme F420 biosynthesis. In terms of biological role, guanylyltransferase that catalyzes the activation of (2S)-2-phospholactate (2-PL) as (2S)-lactyl-2-diphospho-5'-guanosine, via the condensation of 2-PL with GTP. It is involved in the biosynthesis of coenzyme F420, a hydride carrier cofactor. This Methanocaldococcus sp. (strain FS406-22) protein is 2-phospho-L-lactate guanylyltransferase.